Reading from the N-terminus, the 306-residue chain is Acetyl-coenzyme A carboxylase carboxyl transferase subunit beta (306 aa).

Residues 25-294 (VWTKCDSCGQ…PSPDAPREAV (270 aa)) form the CoA carboxyltransferase N-terminal domain. Residues Cys-29, Cys-32, Cys-48, and Cys-51 each contribute to the Zn(2+) site. A C4-type zinc finger spans residues 29-51 (CDSCGQVLYRAELERNLEVCPKC). The tract at residues 286 to 306 (SPDAPREAVVVPPVPDQDHEA) is disordered.

The protein belongs to the AccD/PCCB family. In terms of assembly, acetyl-CoA carboxylase is a heterohexamer composed of biotin carboxyl carrier protein (AccB), biotin carboxylase (AccC) and two subunits each of ACCase subunit alpha (AccA) and ACCase subunit beta (AccD). Zn(2+) is required as a cofactor.

The protein resides in the cytoplasm. It catalyses the reaction N(6)-carboxybiotinyl-L-lysyl-[protein] + acetyl-CoA = N(6)-biotinyl-L-lysyl-[protein] + malonyl-CoA. It functions in the pathway lipid metabolism; malonyl-CoA biosynthesis; malonyl-CoA from acetyl-CoA: step 1/1. In terms of biological role, component of the acetyl coenzyme A carboxylase (ACC) complex. Biotin carboxylase (BC) catalyzes the carboxylation of biotin on its carrier protein (BCCP) and then the CO(2) group is transferred by the transcarboxylase to acetyl-CoA to form malonyl-CoA. The protein is Acetyl-coenzyme A carboxylase carboxyl transferase subunit beta of Cronobacter sakazakii (strain ATCC BAA-894) (Enterobacter sakazakii).